We begin with the raw amino-acid sequence, 265 residues long: Hydroxyethylthiazole kinase (265 aa).

Methionine 43 provides a ligand contact to substrate. ATP-binding residues include arginine 119 and serine 165. Residue alanine 192 coordinates substrate.

The protein belongs to the Thz kinase family. It depends on Mg(2+) as a cofactor.

The catalysed reaction is 5-(2-hydroxyethyl)-4-methylthiazole + ATP = 4-methyl-5-(2-phosphooxyethyl)-thiazole + ADP + H(+). It participates in cofactor biosynthesis; thiamine diphosphate biosynthesis; 4-methyl-5-(2-phosphoethyl)-thiazole from 5-(2-hydroxyethyl)-4-methylthiazole: step 1/1. In terms of biological role, catalyzes the phosphorylation of the hydroxyl group of 4-methyl-5-beta-hydroxyethylthiazole (THZ). This Haemophilus influenzae (strain ATCC 51907 / DSM 11121 / KW20 / Rd) protein is Hydroxyethylthiazole kinase.